The sequence spans 367 residues: Cyclin-Y-like protein 1 (367 aa).

Phosphoserine occurs at positions 73, 111, and 118. The 106-residue stretch at 186-291 (EYFKHDPEHK…FLELLQFNIN (106 aa)) folds into the Cyclin N-terminal domain. Ser-352 carries the phosphoserine modification.

This sequence belongs to the cyclin family. Cyclin Y subfamily. In terms of assembly, interacts with CDK16; this interaction mutually increases the stability of CDK16 and CCNYL1 and increases the kinase activity of CDK16. As to expression, highly expressed in the testis. Largely restricted to germ cells in the testis.

It localises to the cell membrane. Key regulator of Wnt signaling implicated in various biological processes including male fertility, embryonic neurogenesis and cortex development. Activates the cyclin-dependent kinase CDK16, and promotes sperm maturation. In Mus musculus (Mouse), this protein is Cyclin-Y-like protein 1.